Here is a 413-residue protein sequence, read N- to C-terminus: BEN domain-containing protein 7 (413 aa).

Glycyl lysine isopeptide (Lys-Gly) (interchain with G-Cter in SUMO2) cross-links involve residues K16, K56, and K85. The segment covering 78–88 has biased composition (basic and acidic residues); sequence GKEGEKLKEEP. Disordered stretches follow at residues 78–153 and 208–243; these read GKEG…GELP and RTAVSRKRNKKKKVPPKTVEPLTVKQKPSGSEMEKK. 2 stretches are compositionally biased toward polar residues: residues 99–111 and 121–153; these read LNSSAEAPQSLHP and PPQSGQFSGQYGTRSRTFQSQPHPTTSSNGELP. Positions 211–222 are enriched in basic residues; sequence VSRKRNKKKKVP. Over residues 223 to 232 the composition is skewed to low complexity; that stretch reads PKTVEPLTVK. A Glycyl lysine isopeptide (Lys-Gly) (interchain with G-Cter in SUMO2) cross-link involves residue K243. One can recognise a BEN domain in the interval 287–392; sequence GFDVFMPKSQ…IKLARRRLKR (106 aa). At T324 the chain carries Phosphothreonine. S328 carries the post-translational modification Phosphoserine.

The sequence is that of BEN domain-containing protein 7 (BEND7) from Homo sapiens (Human).